Here is a 525-residue protein sequence, read N- to C-terminus: GMP synthase [glutamine-hydrolyzing] (525 aa).

One can recognise a Glutamine amidotransferase type-1 domain in the interval 9–207 (RILILDFGSQ…VRDICQCEAL (199 aa)). The active-site Nucleophile is Cys-86. Active-site residues include His-181 and Glu-183. A GMPS ATP-PPase domain is found at 208-400 (WTPAKIIDDA…LGLPYDMLYR (193 aa)). 235 to 241 (SGGVDSS) is a binding site for ATP.

As to quaternary structure, homodimer.

The enzyme catalyses XMP + L-glutamine + ATP + H2O = GMP + L-glutamate + AMP + diphosphate + 2 H(+). It functions in the pathway purine metabolism; GMP biosynthesis; GMP from XMP (L-Gln route): step 1/1. Its function is as follows. Catalyzes the synthesis of GMP from XMP. The chain is GMP synthase [glutamine-hydrolyzing] from Shigella sonnei (strain Ss046).